Here is a 178-residue protein sequence, read N- to C-terminus: Bifunctional protein PyrR (178 aa).

The short motif at 99-111 is the PRPP-binding element; it reads VVLVDDVIYTGRT.

The protein belongs to the purine/pyrimidine phosphoribosyltransferase family. PyrR subfamily. In terms of assembly, homodimer and homohexamer; in equilibrium.

It catalyses the reaction UMP + diphosphate = 5-phospho-alpha-D-ribose 1-diphosphate + uracil. In terms of biological role, regulates transcriptional attenuation of the pyrimidine nucleotide (pyr) operon by binding in a uridine-dependent manner to specific sites on pyr mRNA. This disrupts an antiterminator hairpin in the RNA and favors formation of a downstream transcription terminator, leading to a reduced expression of downstream genes. Functionally, also displays a weak uracil phosphoribosyltransferase activity which is not physiologically significant. The chain is Bifunctional protein PyrR from Thermoanaerobacter pseudethanolicus (strain ATCC 33223 / 39E) (Clostridium thermohydrosulfuricum).